Here is a 441-residue protein sequence, read N- to C-terminus: C4-dicarboxylate transport protein (441 aa).

8 consecutive transmembrane segments (helical) span residues 9–29 (SLYF…HFMP), 45–65 (LVKM…IAGM), 79–99 (LLYF…VVNV), 145–165 (AFAE…GFAL), 187–207 (FAAI…AMAF), 220–240 (LAAL…LVLG), 308–328 (IYLT…LTLT), and 356–376 (AATL…ILGI).

Belongs to the dicarboxylate/amino acid:cation symporter (DAACS) (TC 2.A.23) family.

The protein localises to the cell inner membrane. Functionally, responsible for the transport of dicarboxylates such as succinate, fumarate, and malate from the periplasm across the membrane. This is C4-dicarboxylate transport protein from Laribacter hongkongensis (strain HLHK9).